Reading from the N-terminus, the 204-residue chain is Elongation factor Ts (204 aa).

The segment at 80–83 (TDFV) is involved in Mg(2+) ion dislocation from EF-Tu.

This sequence belongs to the EF-Ts family.

Its subcellular location is the cytoplasm. Associates with the EF-Tu.GDP complex and induces the exchange of GDP to GTP. It remains bound to the aminoacyl-tRNA.EF-Tu.GTP complex up to the GTP hydrolysis stage on the ribosome. In Caldicellulosiruptor bescii (strain ATCC BAA-1888 / DSM 6725 / KCTC 15123 / Z-1320) (Anaerocellum thermophilum), this protein is Elongation factor Ts.